A 348-amino-acid polypeptide reads, in one-letter code: Protein RecA (348 aa).

G65–T72 provides a ligand contact to ATP.

It belongs to the RecA family.

Its subcellular location is the cytoplasm. Functionally, can catalyze the hydrolysis of ATP in the presence of single-stranded DNA, the ATP-dependent uptake of single-stranded DNA by duplex DNA, and the ATP-dependent hybridization of homologous single-stranded DNAs. It interacts with LexA causing its activation and leading to its autocatalytic cleavage. The chain is Protein RecA from Alteromonas mediterranea (strain DSM 17117 / CIP 110805 / LMG 28347 / Deep ecotype).